The sequence spans 655 residues: Squalene-tetrahymanol cyclase THC1 (655 aa).

Positions 1 to 20 are cleaved as a signal peptide; it reads MKKILIGLIIGLFLFSSVNA. N-linked (GlcNAc...) asparagine glycans are attached at residues Asn23, Asn44, Asn69, and Asn77. Asp373 functions as the Proton donor in the catalytic mechanism. PFTB repeat units follow at residues 393–435 and 515–562; these read IPET…GIAN and VQNS…GLLA.

It belongs to the terpene cyclase/mutase family.

It localises to the membrane. It carries out the reaction tetrahymanol = squalene + H2O. With respect to regulation, 2,3-iminosqualene and N,N-dimethyldodecylamine~N-oxlde are effective inhibitors with IC(50) values of 50 and 30 nM, respectively. Its function is as follows. Squalene cyclase that catalyzes the oxygen-independent cyclization of squalene into tetrahymanol, a triterpenoid sterol with five cyclohexyl rings that is involved in membrane integrity, permeability and fluidity. The sequence is that of Squalene-tetrahymanol cyclase THC1 from Tetrahymena thermophila (strain SB210).